Reading from the N-terminus, the 489-residue chain is Metalloreductase STEAP2 (489 aa).

Residues 37 to 40 (SGDF), 59 to 60 (SR), 92 to 99 (IHREHYTS), asparagine 117, and alanine 150 contribute to the NADP(+) site. FAD is bound by residues tryptophan 151 and aspartate 159. The helical transmembrane segment at 207–227 (LFTLWRGPVVVAISLATFFFL) threads the bilayer. Residue tyrosine 228 coordinates Fe(3+). Residues 258 to 278 (LPIVAITLLSLVYLAGLLAAA) traverse the membrane as a helical segment. Residues 258–406 (LPIVAITLLS…LGYVALLITT (149 aa)) form the Ferric oxidoreductase domain. The FAD site is built by glutamine 280 and arginine 301. 4 helical membrane passes run 304–324 (LGLL…CLPM), 358–378 (MYIS…VTSI), 392–412 (FIQS…VLIY), and 431–451 (FVLA…LLLP). Histidine 315 lines the heme b pocket. Residue tyrosine 318 coordinates Fe(3+). Positions 377 and 394 each coordinate FAD. Histidine 408 lines the heme b pocket. Serine 482 is modified (phosphoserine).

It belongs to the STEAP family. FAD serves as cofactor. The cofactor is heme b.

The protein resides in the cell membrane. It localises to the endosome membrane. It carries out the reaction 2 Fe(2+) + NADP(+) + H(+) = 2 Fe(3+) + NADPH. The enzyme catalyses 2 Cu(+) + NADP(+) + H(+) = 2 Cu(2+) + NADPH. Functionally, integral membrane protein that functions as a NADPH-dependent ferric-chelate reductase, using NADPH from one side of the membrane to reduce a Fe(3+) chelate that is bound on the other side of the membrane. Mediates sequential transmembrane electron transfer from NADPH to FAD and onto heme, and finally to the Fe(3+) chelate. Can also reduce Cu(2+) to Cu(1+). The polypeptide is Metalloreductase STEAP2 (Steap2) (Mus musculus (Mouse)).